A 503-amino-acid polypeptide reads, in one-letter code: WD repeat-containing protein 55 homolog (503 aa).

2 disordered regions span residues 1-21 (MHTH…DLDD) and 35-132 (ALVG…DDLD). Acidic residues-rich tracts occupy residues 12 to 21 (DADELDDLDD), 40 to 50 (DVSDSDIDEHD), and 78 to 96 (NAED…DEAE). WD repeat units lie at residues 157-196 (KLED…NKLL), 201-242 (VHSK…KLYE), 244-282 (AHDD…PIFE), 285-324 (EVED…LYVQ), 327-366 (PYEE…YHCD), and 411-450 (QHNM…DFGD). Positions 483–503 (TKEDEDNADNNDAAAGPSNSA) are disordered.

The protein belongs to the WD repeat WDR55 family.

The protein is WD repeat-containing protein 55 homolog of Drosophila persimilis (Fruit fly).